We begin with the raw amino-acid sequence, 517 residues long: MKLFWVKRLLRISTVVVTLLLLQRTNAAIPDCDYYDTVDISAAQKLPNGSYLFEGLLVPANLTAEYEFTILPDDSKQKVDKHIRGCVCKLKPCVRFCCPHNHIMDMNVCAGDMTEEELEVLDPFLNVTLDDGSVVRRHFKKELIVQWDLPMSCDGMFSLDNREKTDQYTLFENGSFFRHHDRVTLNKREYCLQHLTFVDGNESSIRIAPHNCLISPSRMGQTVVMITSLVCMVLTITVYLFVKKLQNLHGKCFMCYMVCLFMAYLLLLLNLWQMSQNFCITAGFLGYFFVMAAFLWLSVISLHLWNTFSGSAHNANRFLSEHRFLAYNTYAWGMAVVLTGITYLADKVVENEDWNPRMGFGGHCWICTQSWSAMLYFYGPMVFLIAFNITMFILTANRIIGVKKDIQKFAHRQERKQKLNSDKQTYTFFLRLFIIMGLTWSLEIGSYISQFNQTWSNVFLVADYLNWSQGIIIFILFVLKRSTLRLLMESIRGEGEEVNDSEEEISLENTKYDRNVL.

The first 27 residues, 1–27 (MKLFWVKRLLRISTVVVTLLLLQRTNA), serve as a signal peptide directing secretion. The Extracellular portion of the chain corresponds to 28 to 221 (AIPDCDYYDT…CLISPSRMGQ (194 aa)). 5 disulfides stabilise this stretch: Cys32–Cys86, Cys88–Cys93, Cys97–Cys191, Cys98–Cys109, and Cys153–Cys212. N-linked (GlcNAc...) asparagine glycans are attached at residues Asn48 and Asn61. N-linked (GlcNAc...) asparagine glycosylation is found at Asn126, Asn173, and Asn201. Residues 222–242 (TVVMITSLVCMVLTITVYLFV) form a helical membrane-spanning segment. At 243–251 (KKLQNLHGK) the chain is on the cytoplasmic side. The chain crosses the membrane as a helical span at residues 252–272 (CFMCYMVCLFMAYLLLLLNLW). Over 273–279 (QMSQNFC) the chain is Extracellular. Residues 280–300 (ITAGFLGYFFVMAAFLWLSVI) traverse the membrane as a helical segment. The Cytoplasmic segment spans residues 301–323 (SLHLWNTFSGSAHNANRFLSEHR). The helical transmembrane segment at 324–344 (FLAYNTYAWGMAVVLTGITYL) threads the bilayer. The Extracellular segment spans residues 345–373 (ADKVVENEDWNPRMGFGGHCWICTQSWSA). The chain crosses the membrane as a helical span at residues 374–394 (MLYFYGPMVFLIAFNITMFIL). Topologically, residues 395–427 (TANRIIGVKKDIQKFAHRQERKQKLNSDKQTYT) are cytoplasmic. A helical transmembrane segment spans residues 428–448 (FFLRLFIIMGLTWSLEIGSYI). Residues 449–457 (SQFNQTWSN) are Extracellular-facing. Asn452 is a glycosylation site (N-linked (GlcNAc...) asparagine). Residues 458-478 (VFLVADYLNWSQGIIIFILFV) form a helical membrane-spanning segment. Residues 479–517 (LKRSTLRLLMESIRGEGEEVNDSEEEISLENTKYDRNVL) lie on the Cytoplasmic side of the membrane.

The protein belongs to the G-protein coupled receptor 2 family. Mth subfamily. In terms of assembly, homodimer.

It localises to the cell membrane. Involved in biological aging and stress response. Essential for adult survival. The chain is G-protein coupled receptor Mth (mth) from Drosophila yakuba (Fruit fly).